A 658-amino-acid chain; its full sequence is ATP-dependent zinc metalloprotease FtsH 4 (658 aa).

The disordered stretch occupies residues 1-22 (MREPTNRQGSPGPGEPRPPAQG). The Cytoplasmic portion of the chain corresponds to 1–28 (MREPTNRQGSPGPGEPRPPAQGRPRFPT). A helical membrane pass occupies residues 29–49 (WILWVALLALALWNVYTFFWP). The Extracellular segment spans residues 50 to 149 (SSGARLNIPY…TVKIDQAGGS (100 aa)). The tract at residues 95 to 114 (QVLSPGDPVPPGTSPNEIRT) is disordered. A helical membrane pass occupies residues 150–170 (VWPSLLATIVPLFLFIGLMVY). Residues 171–658 (LGRSMSRGQQ…AAPAAAADSV (488 aa)) are Cytoplasmic-facing. 243–250 (GPPGTGKT) is a binding site for ATP. His464 lines the Zn(2+) pocket. The active site involves Glu465. The Zn(2+) site is built by His468 and Asp540.

It in the central section; belongs to the AAA ATPase family. In the C-terminal section; belongs to the peptidase M41 family. Homohexamer. Zn(2+) is required as a cofactor.

It is found in the cell membrane. Acts as a processive, ATP-dependent zinc metallopeptidase for both cytoplasmic and membrane proteins. Plays a role in the quality control of integral membrane proteins. The chain is ATP-dependent zinc metalloprotease FtsH 4 (ftsh4) from Sphaerobacter thermophilus (strain ATCC 49802 / DSM 20745 / KCCM 41009 / NCIMB 13125 / S 6022).